A 320-amino-acid polypeptide reads, in one-letter code: Probable arabinan endo-1,5-alpha-L-arabinosidase C (320 aa).

A signal peptide spans 1 to 16 (MYRSTLLFLFIALVNA). The active-site Proton acceptor is the Asp31. Asn73, Asn137, and Asn191 each carry an N-linked (GlcNAc...) asparagine glycan. The active-site Proton donor is Glu199.

Belongs to the glycosyl hydrolase 43 family.

It localises to the secreted. The enzyme catalyses Endohydrolysis of (1-&gt;5)-alpha-arabinofuranosidic linkages in (1-&gt;5)-arabinans.. It participates in glycan metabolism; L-arabinan degradation. In terms of biological role, endo-1,5-alpha-L-arabinanase involved in degradation of pectin. Its preferred substrate is linear 1,5-alpha-L-arabinan. The polypeptide is Probable arabinan endo-1,5-alpha-L-arabinosidase C (abnC) (Aspergillus terreus (strain NIH 2624 / FGSC A1156)).